The sequence spans 167 residues: Bacterioferritin (167 aa).

In terms of domain architecture, Ferritin-like diiron spans Met1–Gly145. Fe cation-binding residues include Glu18 and Glu51. Residue Met52 coordinates heme b. Residues His54, Glu94, Glu127, and His130 each coordinate Fe cation.

It belongs to the bacterioferritin family. Homooligomer of 24 subunits, arranged as 12 dimers, that are packed together to form an approximately spherical molecule with a central cavity, in which large amounts of iron can be deposited. The cofactor is heme b.

The catalysed reaction is 4 Fe(2+) + O2 + 4 H(+) = 4 Fe(3+) + 2 H2O. It catalyses the reaction Fe(2+)(in) = Fe(2+)(out). Functionally, iron-storage protein, whose ferroxidase center binds Fe(2+), oxidizes it using dioxygen to Fe(3+), and participates in the subsequent Fe(3+) oxide mineral core formation within the central cavity of the BFR protein shell. The chain is Bacterioferritin (bfr) from Streptomyces coelicolor (strain ATCC BAA-471 / A3(2) / M145).